The following is a 682-amino-acid chain: Iron-phytosiderophore transporter yellow stripe 1 (682 aa).

Positions Met-1–Arg-36 are disordered. A run of 15 helical transmembrane segments spans residues Gly-56 to Leu-76, Gly-79 to Trp-99, Cys-124 to Leu-144, Gly-167 to Ile-187, Leu-236 to Val-256, Leu-288 to Ile-308, Phe-334 to Val-354, Phe-396 to Ile-416, Val-428 to Leu-448, Ile-460 to Ala-480, Val-514 to Phe-534, Ala-549 to Leu-569, Leu-574 to Leu-594, Phe-612 to Trp-632, and Ala-640 to Phe-660.

Belongs to the YSL (TC 2.A.67.2) family. As to expression, expressed in roots of young maize seedlings. Not detected in leaves of iron-sufficient plants, but accumulates in roots and leaves of iron-deficient plants.

It localises to the membrane. Functionally, involved in Fe(3+) uptake. Acts as a proton-coupled symporter for phytosiderophore- and nicotianamine-chelated metals. Capable of transporting either Fe(2+)-nicotianamine or Fe(3+)-phytosiderophore. May transport iron, zinc, nickel, copper and, at a lower rate, manganese and cadmium. The polypeptide is Iron-phytosiderophore transporter yellow stripe 1 (YS1) (Zea mays (Maize)).